The chain runs to 247 residues: ATP synthase subunit a, chloroplastic (247 aa).

Transmembrane regions (helical) follow at residues 38-58, 95-115, 134-154, 199-219, and 220-240; these read QVLITSWVVIAILLGSATIAV, VPFIGTMFLFIFVSNWSGALL, INTTVALALPTSMAYFYAGFT, LVVVVLVSLVPSVVPIPVMFL, and GLFTSGIQALIFATLAAAYIG.

It belongs to the ATPase A chain family. In terms of assembly, F-type ATPases have 2 components, CF(1) - the catalytic core - and CF(0) - the membrane proton channel. CF(1) has five subunits: alpha(3), beta(3), gamma(1), delta(1), epsilon(1). CF(0) has four main subunits: a, b, b' and c.

The protein localises to the plastid. Its subcellular location is the chloroplast thylakoid membrane. Functionally, key component of the proton channel; it plays a direct role in the translocation of protons across the membrane. The chain is ATP synthase subunit a, chloroplastic from Liriodendron tulipifera (Tuliptree).